Consider the following 287-residue polypeptide: Ribosomal RNA small subunit methyltransferase A (287 aa).

Residues asparagine 28, leucine 30, glycine 55, glutamate 77, aspartate 103, and asparagine 123 each coordinate S-adenosyl-L-methionine.

It belongs to the class I-like SAM-binding methyltransferase superfamily. rRNA adenine N(6)-methyltransferase family. RsmA subfamily.

It is found in the cytoplasm. It carries out the reaction adenosine(1518)/adenosine(1519) in 16S rRNA + 4 S-adenosyl-L-methionine = N(6)-dimethyladenosine(1518)/N(6)-dimethyladenosine(1519) in 16S rRNA + 4 S-adenosyl-L-homocysteine + 4 H(+). Its function is as follows. Specifically dimethylates two adjacent adenosines (A1518 and A1519) in the loop of a conserved hairpin near the 3'-end of 16S rRNA in the 30S particle. May play a critical role in biogenesis of 30S subunits. This chain is Ribosomal RNA small subunit methyltransferase A, found in Rhodopseudomonas palustris (strain BisA53).